A 431-amino-acid polypeptide reads, in one-letter code: UDP-N-acetylglucosamine 1-carboxyvinyltransferase (431 aa).

Position 25–26 (K25–N26) interacts with phosphoenolpyruvate. R101 contributes to the UDP-N-acetyl-alpha-D-glucosamine binding site. C125 serves as the catalytic Proton donor. C125 is modified (2-(S-cysteinyl)pyruvic acid O-phosphothioketal). D317 and I339 together coordinate UDP-N-acetyl-alpha-D-glucosamine.

The protein belongs to the EPSP synthase family. MurA subfamily.

It is found in the cytoplasm. The catalysed reaction is phosphoenolpyruvate + UDP-N-acetyl-alpha-D-glucosamine = UDP-N-acetyl-3-O-(1-carboxyvinyl)-alpha-D-glucosamine + phosphate. It functions in the pathway cell wall biogenesis; peptidoglycan biosynthesis. Its function is as follows. Cell wall formation. Adds enolpyruvyl to UDP-N-acetylglucosamine. This Thermobifida fusca (strain YX) protein is UDP-N-acetylglucosamine 1-carboxyvinyltransferase.